Consider the following 234-residue polypeptide: 7-cyano-7-deazaguanine synthase (234 aa).

ATP is bound at residue 8-18 (FSGGQDSTTCA). Positions 194, 202, 205, and 208 each coordinate Zn(2+).

It belongs to the QueC family. Zn(2+) serves as cofactor.

The catalysed reaction is 7-carboxy-7-deazaguanine + NH4(+) + ATP = 7-cyano-7-deazaguanine + ADP + phosphate + H2O + H(+). The protein operates within purine metabolism; 7-cyano-7-deazaguanine biosynthesis. Functionally, catalyzes the ATP-dependent conversion of 7-carboxy-7-deazaguanine (CDG) to 7-cyano-7-deazaguanine (preQ(0)). This Gloeobacter violaceus (strain ATCC 29082 / PCC 7421) protein is 7-cyano-7-deazaguanine synthase.